The chain runs to 109 residues: Large ribosomal subunit protein uL24 (109 aa).

It belongs to the universal ribosomal protein uL24 family. As to quaternary structure, part of the 50S ribosomal subunit.

In terms of biological role, one of two assembly initiator proteins, it binds directly to the 5'-end of the 23S rRNA, where it nucleates assembly of the 50S subunit. One of the proteins that surrounds the polypeptide exit tunnel on the outside of the subunit. This Ehrlichia canis (strain Jake) protein is Large ribosomal subunit protein uL24.